Here is a 198-residue protein sequence, read N- to C-terminus: Neutrophil gelatinase-associated lipocalin (198 aa).

The N-terminal stretch at Met-1–Ala-20 is a signal peptide. Position 21 is a pyrrolidone carboxylic acid (Gln-21). Position 72-74 (Tyr-72–Thr-74) interacts with a carboxymycobactin. N-linked (GlcNAc...) asparagine glycosylation is present at Asn-85. Cys-96 and Cys-195 are joined by a disulfide. Tyr-126 lines the enterobactin pocket. A carboxymycobactin-binding residues include Lys-145, Lys-154, and Tyr-158. Lys-154 contributes to the enterobactin binding site.

This sequence belongs to the calycin superfamily. Lipocalin family. In terms of assembly, monomer. Homodimer; disulfide-linked. Heterodimer; disulfide-linked with MMP9. As to expression, detected in the ureteric bud in embryonic kidney (at protein level).

The protein resides in the secreted. It localises to the cytoplasmic granule lumen. The protein localises to the cytoplasmic vesicle lumen. In terms of biological role, iron-trafficking protein involved in multiple processes such as apoptosis, innate immunity and renal development. Binds iron through association with 2,3-dihydroxybenzoic acid (2,3-DHBA), a siderophore that shares structural similarities with bacterial enterobactin, and delivers or removes iron from the cell, depending on the context. Iron-bound form (holo-24p3) is internalized following binding to the SLC22A17 (24p3R) receptor, leading to release of iron and subsequent increase of intracellular iron concentration. In contrast, association of the iron-free form (apo-24p3) with the SLC22A17 (24p3R) receptor is followed by association with an intracellular siderophore, iron chelation and iron transfer to the extracellular medium, thereby reducing intracellular iron concentration. Involved in apoptosis due to interleukin-3 (IL3) deprivation: iron-loaded form increases intracellular iron concentration without promoting apoptosis, while iron-free form decreases intracellular iron levels, inducing expression of the proapoptotic protein BCL2L11/BIM, resulting in apoptosis. Involved in innate immunity; limits bacterial proliferation by sequestering iron bound to microbial siderophores, such as enterobactin. Can also bind siderophores from M.tuberculosis. This chain is Neutrophil gelatinase-associated lipocalin (Lcn2), found in Rattus norvegicus (Rat).